The following is a 64-amino-acid chain: uncharacterized protein (64 aa).

The helical transmembrane segment at 33-55 (YTPLGSYMIFGIVHYFCSYHIGI) threads the bilayer.

Its subcellular location is the membrane. This is an uncharacterized protein from Saccharomyces cerevisiae (strain ATCC 204508 / S288c) (Baker's yeast).